The primary structure comprises 111 residues: Nucleoid-associated protein NMA1657 (111 aa).

It belongs to the YbaB/EbfC family. In terms of assembly, homodimer.

Its subcellular location is the cytoplasm. It localises to the nucleoid. In terms of biological role, binds to DNA and alters its conformation. May be involved in regulation of gene expression, nucleoid organization and DNA protection. The polypeptide is Nucleoid-associated protein NMA1657 (Neisseria meningitidis serogroup A / serotype 4A (strain DSM 15465 / Z2491)).